The following is a 160-amino-acid chain: Cytochrome b6-f complex subunit 4 (160 aa).

Transmembrane regions (helical) follow at residues 36–56 (LLYI…GLAV), 95–115 (LLGV…PFLE), and 131–151 (TVFL…ALPI).

Belongs to the cytochrome b family. PetD subfamily. The 4 large subunits of the cytochrome b6-f complex are cytochrome b6, subunit IV (17 kDa polypeptide, petD), cytochrome f and the Rieske protein, while the 4 small subunits are petG, petL, petM and petN. The complex functions as a dimer.

It is found in the plastid. The protein localises to the chloroplast thylakoid membrane. Its function is as follows. Component of the cytochrome b6-f complex, which mediates electron transfer between photosystem II (PSII) and photosystem I (PSI), cyclic electron flow around PSI, and state transitions. This chain is Cytochrome b6-f complex subunit 4, found in Physcomitrium patens (Spreading-leaved earth moss).